A 345-amino-acid chain; its full sequence is S-adenosylmethionine:tRNA ribosyltransferase-isomerase (345 aa).

This sequence belongs to the QueA family. As to quaternary structure, monomer.

Its subcellular location is the cytoplasm. It carries out the reaction 7-aminomethyl-7-carbaguanosine(34) in tRNA + S-adenosyl-L-methionine = epoxyqueuosine(34) in tRNA + adenine + L-methionine + 2 H(+). Its pathway is tRNA modification; tRNA-queuosine biosynthesis. In terms of biological role, transfers and isomerizes the ribose moiety from AdoMet to the 7-aminomethyl group of 7-deazaguanine (preQ1-tRNA) to give epoxyqueuosine (oQ-tRNA). The sequence is that of S-adenosylmethionine:tRNA ribosyltransferase-isomerase from Rhodospirillum rubrum (strain ATCC 11170 / ATH 1.1.1 / DSM 467 / LMG 4362 / NCIMB 8255 / S1).